The following is a 696-amino-acid chain: DNA ligase (696 aa).

Residues 41–45, 90–91, and Glu120 each bind NAD(+); these read DGQYD and SL. Lys122 serves as the catalytic N6-AMP-lysine intermediate. Arg143, Glu180, Lys296, and Lys320 together coordinate NAD(+). Zn(2+) is bound by residues Cys414, Cys417, Cys433, and Cys439. The 90-residue stretch at 603 to 692 folds into the BRCT domain; sequence STPRTLEGLT…PDAVARPAEE (90 aa).

It belongs to the NAD-dependent DNA ligase family. LigA subfamily. The cofactor is Mg(2+). Requires Mn(2+) as cofactor.

The enzyme catalyses NAD(+) + (deoxyribonucleotide)n-3'-hydroxyl + 5'-phospho-(deoxyribonucleotide)m = (deoxyribonucleotide)n+m + AMP + beta-nicotinamide D-nucleotide.. Its function is as follows. DNA ligase that catalyzes the formation of phosphodiester linkages between 5'-phosphoryl and 3'-hydroxyl groups in double-stranded DNA using NAD as a coenzyme and as the energy source for the reaction. It is essential for DNA replication and repair of damaged DNA. In Kineococcus radiotolerans (strain ATCC BAA-149 / DSM 14245 / SRS30216), this protein is DNA ligase.